The following is a 334-amino-acid chain: Aspartate carbamoyltransferase catalytic subunit (334 aa).

2 residues coordinate carbamoyl phosphate: R70 and T71. K98 contacts L-aspartate. Residues R120, H150, and Q153 each coordinate carbamoyl phosphate. Residues R183 and R239 each contribute to the L-aspartate site. Carbamoyl phosphate-binding residues include G280 and P281.

The protein belongs to the aspartate/ornithine carbamoyltransferase superfamily. ATCase family. In terms of assembly, heterododecamer (2C3:3R2) of six catalytic PyrB chains organized as two trimers (C3), and six regulatory PyrI chains organized as three dimers (R2).

The enzyme catalyses carbamoyl phosphate + L-aspartate = N-carbamoyl-L-aspartate + phosphate + H(+). The protein operates within pyrimidine metabolism; UMP biosynthesis via de novo pathway; (S)-dihydroorotate from bicarbonate: step 2/3. Its function is as follows. Catalyzes the condensation of carbamoyl phosphate and aspartate to form carbamoyl aspartate and inorganic phosphate, the committed step in the de novo pyrimidine nucleotide biosynthesis pathway. The protein is Aspartate carbamoyltransferase catalytic subunit of Pseudomonas aeruginosa (strain LESB58).